The following is a 922-amino-acid chain: Probable outer membrane protein pmp1 (922 aa).

An N-terminal signal peptide occupies residues 1–26 (MRFSLCGFPLVFSFTLLSVFDTSLSA). Positions 620–922 (SLQTDRGLWI…NINCGSKFRF (303 aa)) constitute an Autotransporter domain.

Belongs to the PMP outer membrane protein family.

The protein localises to the secreted. The protein resides in the cell wall. It localises to the cell outer membrane. The protein is Probable outer membrane protein pmp1 (pmp1) of Chlamydia pneumoniae (Chlamydophila pneumoniae).